Consider the following 424-residue polypeptide: UDP-glycosyltransferase 76H1 (424 aa).

UDP-alpha-D-glucose-binding positions include Ser248, 306 to 307 (WA), 324 to 332 (HCGWNSTIE), and 346 to 349 (FADQ).

The protein belongs to the UDP-glycosyltransferase family.

Its function is as follows. May glycosylate diterpenes or flavonols in leaves. The protein is UDP-glycosyltransferase 76H1 of Stevia rebaudiana (Stevia).